Reading from the N-terminus, the 166-residue chain is Cyclin-dependent kinase 4 inhibitor D (166 aa).

The residue at position 1 (M1) is an N-acetylmethionine. ANK repeat units lie at residues 41–69 (FGKT…SPNV), 73–102 (SGTS…DVNA), 106–135 (TGSL…LHHR), and 138–165 (SGLT…MMIP).

This sequence belongs to the CDKN2 cyclin-dependent kinase inhibitor family. Interacts with CDK6.

The protein resides in the nucleus. Its subcellular location is the cytoplasm. Its function is as follows. Interacts strongly with CDK4 and CDK6 and inhibits them. The chain is Cyclin-dependent kinase 4 inhibitor D (Cdkn2d) from Mus musculus (Mouse).